Consider the following 346-residue polypeptide: MEVRVANVRKEFERFPALHDVSLDIKSGELIALLGPSGSGKTTLLRLIAGLERPTRGKIFFGDEDASQKSIQERNVGFVFQHYALFRHMTVADNIGFGLKVRHGSSRPPAQEIRRRASELLDLVQLSGLEKRYPAQLSGGQRQRVALARAMAIEPKVLLLDEPFGALDAQVRRELRRWLREIHDRTGHTTVFVTHDQEEALELADRVVVMSQGRIEQVGTADDIYDTPNSPFVYGFIGESSSLPVKVENGEIWLADRPIGLSAPHAPEGEATLYFRPHDVELLDGCSGCIAGTVAASRRVAGTRRVELEIGGERQRVEIELPVGHPAAQKSRVAFRPGRWKLFPAA.

The ABC transporter domain occupies 3-237 (VRVANVRKEF…PNSPFVYGFI (235 aa)). 35 to 42 (GPSGSGKT) serves as a coordination point for ATP.

The protein belongs to the ABC transporter superfamily. Sulfate/tungstate importer (TC 3.A.1.6) family. The complex is composed of two ATP-binding proteins (CysA), two transmembrane proteins (CysT and CysW) and a solute-binding protein (CysP).

Its subcellular location is the cell inner membrane. The catalysed reaction is sulfate(out) + ATP + H2O = sulfate(in) + ADP + phosphate + H(+). It catalyses the reaction thiosulfate(out) + ATP + H2O = thiosulfate(in) + ADP + phosphate + H(+). Functionally, part of the ABC transporter complex CysAWTP involved in sulfate/thiosulfate import. Responsible for energy coupling to the transport system. In Mesorhizobium japonicum (strain LMG 29417 / CECT 9101 / MAFF 303099) (Mesorhizobium loti (strain MAFF 303099)), this protein is Sulfate/thiosulfate import ATP-binding protein CysA.